The primary structure comprises 790 residues: Penicillin-binding protein 1A (790 aa).

The Cytoplasmic portion of the chain corresponds to 1-6 (MYKSLF). The helical; Signal-anchor for type II membrane protein transmembrane segment at 7–27 (FCLKIFAVLILVGCGITAYII) threads the bilayer. The Periplasmic portion of the chain corresponds to 28 to 790 (YHYSRDLPDY…SKEDQSQEIY (763 aa)). A transglycosylase region spans residues 49–220 (TRIYSHDGKL…SELNPERNYA (172 aa)). Glu-87 acts as the Proton donor; for transglycosylase activity in catalysis. The tract at residues 398-711 (DVIVVEPIKD…SNVVLPIFID (314 aa)) is transpeptidase. Residue Ser-457 is the Acyl-ester intermediate; for transpeptidase activity of the active site.

In the N-terminal section; belongs to the glycosyltransferase 51 family. This sequence in the C-terminal section; belongs to the transpeptidase family.

Its subcellular location is the cell inner membrane. The enzyme catalyses [GlcNAc-(1-&gt;4)-Mur2Ac(oyl-L-Ala-gamma-D-Glu-L-Lys-D-Ala-D-Ala)](n)-di-trans,octa-cis-undecaprenyl diphosphate + beta-D-GlcNAc-(1-&gt;4)-Mur2Ac(oyl-L-Ala-gamma-D-Glu-L-Lys-D-Ala-D-Ala)-di-trans,octa-cis-undecaprenyl diphosphate = [GlcNAc-(1-&gt;4)-Mur2Ac(oyl-L-Ala-gamma-D-Glu-L-Lys-D-Ala-D-Ala)](n+1)-di-trans,octa-cis-undecaprenyl diphosphate + di-trans,octa-cis-undecaprenyl diphosphate + H(+). It catalyses the reaction Preferential cleavage: (Ac)2-L-Lys-D-Ala-|-D-Ala. Also transpeptidation of peptidyl-alanyl moieties that are N-acyl substituents of D-alanine.. It participates in cell wall biogenesis; peptidoglycan biosynthesis. Functionally, cell wall formation. Synthesis of cross-linked peptidoglycan from the lipid intermediates. The enzyme has a penicillin-insensitive transglycosylase N-terminal domain (formation of linear glycan strands) and a penicillin-sensitive transpeptidase C-terminal domain (cross-linking of the peptide subunits). The sequence is that of Penicillin-binding protein 1A (mrcA) from Rickettsia felis (strain ATCC VR-1525 / URRWXCal2) (Rickettsia azadi).